The primary structure comprises 658 residues: MEGAAVSAAGDGPAVETGLPGSPLEAVAGATAAPVEPRKPHGVKRHHHKHNLKHRYELQETLGKGTYGKVKRATERFSGRVVAIKSIRKDKIKDELDMVHIRREIEIMSSLNHPHIISIYEVFENKDKIVIIMEYASKGELYDYISERRRLSERETRHFFRQIVSAVHYCHKNGVVHRDLKLENILLDDNCNIKIADFGLSNLYQKDKFLQTFCGSPLYASPEIVNGRPYRGPEVDSWALGVLLYTLIYGTMPFDGFDHKNLIRQISSGEYREPTQPSDARGLIRWMLMVNPDRRATIEDIANHWWVNWGYKSSVCDCDALPDSESPLLARIIDWHHRSTGLQAEAEAKMKGLAKPGASEVVLERQRSLKKSKKENDFPQSGQDSVPESPSKLSSKRPKGILKKRSNSEHRSHSTGFIEGIVSPALPSPFKMEQDLCRTAIPLPSSPEADMSGKLSLKQSATMPKKGILKKTQQRESGYYSSPERSESSELLDSNDVVISGGLSSPPPDPARGTSHSLSCRRKGILKHSSRYSDGGTDPALTRPEMPTLESLSPPGVPSDGISRSYSRPSSIISDDSVLSSDSFDLLELQENRPARQRIRSCVSAENFLQLQDFETPHNRPRPQYLKRLADSSFSLLTDMDDVTQVYKKALEICSKLN.

Methionine 1 carries the post-translational modification N-acetylmethionine. Positions 1-53 are disordered; that stretch reads MEGAAVSAAGDGPAVETGLPGSPLEAVAGATAAPVEPRKPHGVKRHHHKHNLK. At serine 22 the chain carries Phosphoserine. Residues 40–53 show a composition bias toward basic residues; that stretch reads PHGVKRHHHKHNLK. The Protein kinase domain occupies 56–307; sequence YELQETLGKG…IEDIANHWWV (252 aa). ATP-binding positions include 62 to 70 and lysine 85; that span reads LGKGTYGKV. Aspartate 179 acts as the Proton acceptor in catalysis. A Phosphothreonine; by LKB1 modification is found at threonine 212. Disordered stretches follow at residues 353 to 422 and 441 to 568; these read LAKP…EGIV and IPLP…SYSR. The segment covering 378 to 393 has biased composition (polar residues); it reads FPQSGQDSVPESPSKL. Residues 394–405 are compositionally biased toward basic residues; sequence SSKRPKGILKKR. The GILK motif signature appears at 400–403; it reads GILK. At serine 456 the chain carries Phosphoserine. Over residues 519-530 the composition is skewed to basic residues; sequence SCRRKGILKHSS. The segment covering 559–568 has biased composition (low complexity); it reads SDGISRSYSR. Serine 601 carries the phosphoserine; by PKB/AKT1 modification.

It belongs to the protein kinase superfamily. CAMK Ser/Thr protein kinase family. SNF1 subfamily. As to quaternary structure, interacts (via GILK motif) with PPP1CB; the interaction is direct and bridges NUAK1 and PPP1R12A. Interacts with CDKN1A. The cofactor is Mg(2+). Phosphorylated at Thr-212 by STK11/LKB1 in complex with STE20-related adapter-alpha (STRADA) pseudo kinase and CAB39. Not dephosphorylated by the myosin PP1 complex when regulating its activity, due to the presence of PPP1R12A, which prevents myosin PP1 from dephosphorylating NUAK1. Phosphorylated by STK38L upon stimulation with IGF1. Post-translationally, ubiquitinated with 'Lys-29'- and 'Lys-33'-linked polyubiquitins which appear to impede LKB1-mediated phosphorylation. Deubiquitinated by USP9X. As to expression, expressed in the developing central nervous system, in epidermis, and some other tissues.

The protein localises to the nucleus. It localises to the cytoplasm. It carries out the reaction L-seryl-[protein] + ATP = O-phospho-L-seryl-[protein] + ADP + H(+). The catalysed reaction is L-threonyl-[protein] + ATP = O-phospho-L-threonyl-[protein] + ADP + H(+). With respect to regulation, activated by phosphorylation on Thr-212. Activated by phosphorylation at Ser-601 AKT1 during glucose starvation; the relevance of such activation in normal cells is however unsure. Serine/threonine-protein kinase involved in various processes such as cell adhesion, regulation of cell ploidy and senescence, cell proliferation and tumor progression. Phosphorylates ATM, CASP6, LATS1, PPP1R12A and p53/TP53. Acts as a regulator of cellular senescence and cellular ploidy by mediating phosphorylation of 'Ser-464' of LATS1, thereby controlling its stability. Controls cell adhesion by regulating activity of the myosin protein phosphatase 1 (PP1) complex. Acts by mediating phosphorylation of PPP1R12A subunit of myosin PP1: phosphorylated PPP1R12A then interacts with 14-3-3, leading to reduced dephosphorylation of myosin MLC2 by myosin PP1. May be involved in DNA damage response: phosphorylates p53/TP53 at 'Ser-15' and 'Ser-392' and is recruited to the CDKN1A/WAF1 promoter to participate in transcription activation by p53/TP53. May also act as a tumor malignancy-associated factor by promoting tumor invasion and metastasis under regulation and phosphorylation by AKT1. Suppresses Fas-induced apoptosis by mediating phosphorylation of CASP6, thereby suppressing the activation of the caspase and the subsequent cleavage of CFLAR. Regulates UV radiation-induced DNA damage response mediated by CDKN1A. In association with STK11, phosphorylates CDKN1A in response to UV radiation and contributes to its degradation which is necessary for optimal DNA repair. The sequence is that of NUAK family SNF1-like kinase 1 (Nuak1) from Mus musculus (Mouse).